Here is a 595-residue protein sequence, read N- to C-terminus: P2X purinoceptor 7 (595 aa).

Residues Met1–Gln22 lie on the Cytoplasmic side of the membrane. Cys4 is lipidated: S-palmitoyl cysteine. Residues Ser23–Val46 form a helical membrane-spanning segment. Topologically, residues Ser47 to Phe328 are extracellular. 3 disulfides stabilise this stretch: Cys119/Cys168, Cys129/Cys152, and Cys135/Cys162. Arg125 and Arg133 each carry ADP-ribosylarginine. The N-linked (GlcNAc...) asparagine glycan is linked to Asn187. Thr189 provides a ligand contact to ATP. Asn202 and Asn213 each carry an N-linked (GlcNAc...) asparagine glycan. A disulfide bridge links Cys216 with Cys226. Asn241 is a glycosylation site (N-linked (GlcNAc...) asparagine). The cysteines at positions 260 and 269 are disulfide-linked. An N-linked (GlcNAc...) asparagine glycan is attached at Asn284. Arg294 and Lys311 together coordinate ATP. The chain crosses the membrane as a helical span at residues Asp329–Phe353. Ser342 lines the Na(+) pocket. At Tyr343 the chain carries Phosphotyrosine. The Cytoplasmic portion of the chain corresponds to Leu354–Tyr595. Residues Ser360–Cys377 are C-cys anchor. 4 S-palmitoyl cysteine lipidation sites follow: Cys362, Cys363, Cys374, and Cys377. Residue Ser390 is modified to Phosphoserine. Residues Lys395–Tyr595 form a cytoplasmic ballast region. The Zn(2+) site is built by Cys479, Cys499, and Cys506. Residues Arg546, His547, Tyr550, and Ala567 each coordinate GTP. Cys572 contributes to the Zn(2+) binding site. The GTP site is built by Lys583, Ser589, and Gly590.

This sequence belongs to the P2X receptor family. In terms of assembly, homotrimers. Interacts with LAMA3, ITGB2, ACTB, ACTN4, SVIL, MPP3, HSPA1, HSPCB, HSPA8, PIK230 and PTPRB. Interacts (via C-terminus) with EMP2. Interacts with isoform B; this interaction potentiates P2RX7 responses. Phosphorylation results in its inactivation. In terms of processing, ADP-ribosylation at Arg-125 is necessary and sufficient to activate P2RX7 and gate the channel. Post-translationally, palmitoylation of several cysteines in the C-terminal cytoplasmic tail is required for efficient localization to cell surface. Palmitoylation prevents channel desensitization by physically anchoring the palmitoylated groups to the membrane. Widely expressed with highest levels in brain and immune tissues. As to expression, predominant form in many tissues.

Its subcellular location is the cell membrane. The enzyme catalyses Ca(2+)(in) = Ca(2+)(out). It carries out the reaction K(+)(in) = K(+)(out). It catalyses the reaction Na(+)(in) = Na(+)(out). Its activity is regulated as follows. Activated by high extracellular ATP levels (0.1-2.5 mM). The synthetic analog 2'(3')-O-(4-benzoylbenzoyl)ATP (BzATP) acts as a potent agonist. Does not undergo desensitization, instead, undergoes a facilitation process where currents progressively increase with repetitive or prolonged agonist application. Palmitoylation prevents channel desensitization. The permeability of the P2RX7 channel is modulated by the amount of cholesterol in the plasma membrane. Functionally, ATP-gated nonselective transmembrane cation channel that requires high millimolar concentrations of ATP for activation. Upon ATP binding, it rapidly opens to allow the influx of small cations Na(+) and Ca(2+), and the K(+) efflux. Also has the ability to form a large pore in the cell membrane, allowing the passage of large cationic molecules. In microglia, may mediate NADPH transport across the plasma membrane. In immune cells, P2RX7 acts as a molecular sensor in pathological inflammatory states by detecting and responding to high local concentrations of extracellar ATP. In microglial cells, P2RX7 activation leads to the release of pro-inflammatory cytokines, such as IL-1beta and IL-18, through the activation of the NLRP3 inflammasome and caspase-1. Cooperates with KCNK6 to activate NLRP3 inflammasome. Activates death pathways leading to apoptosis and autophagy. Activates death pathways leading to pyroptosis. In terms of biological role, shows ion channel activity but no macropore function. Its function is as follows. Non-functional channel. The chain is P2X purinoceptor 7 (P2RX7) from Homo sapiens (Human).